The sequence spans 305 residues: Coenzyme PQQ synthesis protein B (305 aa).

It belongs to the PqqB family.

It functions in the pathway cofactor biosynthesis; pyrroloquinoline quinone biosynthesis. May be involved in the transport of PQQ or its precursor to the periplasm. This chain is Coenzyme PQQ synthesis protein B, found in Methylobacillus flagellatus (strain ATCC 51484 / DSM 6875 / VKM B-1610 / KT).